A 400-amino-acid polypeptide reads, in one-letter code: D(3) dopamine receptor (400 aa).

The Extracellular portion of the chain corresponds to 1-32 (MASLSQLSGHLNYTCGAENSTGASQARPHAYY). N-linked (GlcNAc...) asparagine glycosylation is found at asparagine 12 and asparagine 19. A helical transmembrane segment spans residues 33–55 (ALSYCALILAIVFGNGLVCMAVL). Topologically, residues 56 to 65 (KERALQTTTN) are cytoplasmic. A helical membrane pass occupies residues 66-88 (YLVVSLAVADLLVATLVMPWVVY). Topologically, residues 89-104 (LEVTGGVWNFSRICCD) are extracellular. N-linked (GlcNAc...) asparagine glycosylation is present at asparagine 97. Residues cysteine 103 and cysteine 181 are joined by a disulfide bond. Residues 105–126 (VFVTLDVMMCTASILNLCAISI) traverse the membrane as a helical segment. Aspartate 110 is a binding site for eticlopride. The Cytoplasmic segment spans residues 127–149 (DRYTAVVMPVHYQHGTGQSSCRR). The helical transmembrane segment at 150 to 170 (VALMITAVWVLAFAVSCPLLF) threads the bilayer. The Extracellular portion of the chain corresponds to 171-187 (GFNTTGDPTVCSISNPD). A glycan (N-linked (GlcNAc...) asparagine) is linked at asparagine 173. A helical membrane pass occupies residues 188 to 209 (FVIYSSVVSFYLPFGVTVLVYA). Topologically, residues 210-329 (RIYVVLKQRR…VPLREKKATQ (120 aa)) are cytoplasmic. The helical transmembrane segment at 330-351 (MVAIVLGAFIVCWLPFFLTHVL) threads the bilayer. 2 residues coordinate eticlopride: phenylalanine 345 and histidine 349. Residues 352–366 (NTHCQTCHVSPELYS) lie on the Extracellular side of the membrane. Cysteine 355 and cysteine 358 are joined by a disulfide. A helical transmembrane segment spans residues 367–386 (ATTWLGYVNSALNPVIYTTF). The Cytoplasmic segment spans residues 387–400 (NIEFRKAFLKILSC).

It belongs to the G-protein coupled receptor 1 family. In terms of assembly, interacts with CLIC6. Interacts with GRK4. Interacts with PALM. Interacts with FLNA (via filamin repeat 21); increases PKA-mediated phosphorylation of FLNA. In terms of processing, phosphorylated by GRK4 (GRK4-alpha and GRK4-gamma). Post-translationally, palmitoylated. As to expression, brain.

The protein localises to the cell membrane. Its function is as follows. Dopamine receptor whose activity is mediated by G proteins which inhibit adenylyl cyclase. Promotes cell proliferation. The protein is D(3) dopamine receptor of Homo sapiens (Human).